A 208-amino-acid chain; its full sequence is Probable molybdenum cofactor guanylyltransferase (208 aa).

Residues Ile-12–Gly-14, Lys-24, Asp-72, and Asp-101 each bind GTP. Asp-101 provides a ligand contact to Mg(2+).

Belongs to the MobA family. It depends on Mg(2+) as a cofactor.

It is found in the cytoplasm. The enzyme catalyses Mo-molybdopterin + GTP + H(+) = Mo-molybdopterin guanine dinucleotide + diphosphate. Its function is as follows. Transfers a GMP moiety from GTP to Mo-molybdopterin (Mo-MPT) cofactor (Moco or molybdenum cofactor) to form Mo-molybdopterin guanine dinucleotide (Mo-MGD) cofactor. The polypeptide is Probable molybdenum cofactor guanylyltransferase (Chloroflexus aggregans (strain MD-66 / DSM 9485)).